The primary structure comprises 248 residues: Trihelix transcription factor ENAP2 (248 aa).

Over residues M1–S13 the composition is skewed to polar residues. Residues M1 to R20 form a disordered region. The segment at residues W24–V113 is a DNA-binding region (MADF). The Nuclear localization signal signature appears at R69–C76. Residues S123–D150 are disordered. Positions L130 to S141 are enriched in polar residues. Residues Y190–E210 are a coiled coil.

As to quaternary structure, interacts with the Agrobacterium tumefaciens virulence protein F (VirF) in the nucleus. Binds to EIN2 C-terminal region in the presence of ethylene.

The protein resides in the nucleus. It is found in the nucleoplasm. Functionally, probable transcription regulator. Promotes histone acetylation during ethylene signaling in an EIN2-dependent manner, thus regulating positively ethylene-responsive genes. In Arabidopsis thaliana (Mouse-ear cress), this protein is Trihelix transcription factor ENAP2.